The chain runs to 856 residues: MKGSKNQLLIAIVLASAYLIHCKQFVTVFYGIPAWRNASIPLFCATKNRDTWGTIQCLPDNDDYQEITLNVTEAFDAWNNTVTEQAVEDVWNLFETSIKPCVKLTPLCVAMNCTRNMTTWTGRTDTQNITIINDTSHARADNCTGLKEEEMIDCQFSMTGLERDKRKQYTEAWYSKDVVCDNNTSSQSKCYMNHCNTSVITESCDKHYWDAMRFRYCAPPGFALLRCNDTNYSGFAPNCSKVVAATCTRMMETQTSTWFGFNGTRAENRTYIYWHGKDNRTIISLNNFYNLTMHCKRPGNKTVLPITFMSGFKFHSQPVINKKPRQAWCWFEGQWKEAMQEVKETLAKHPRYKGNRSRTENIKFKAPGRGSDPEVTYMWTNCRGESLYCNMTWFLNWVENRTGQKQRNYAPCRIRQIINTWHRVGKNLYLPPREGELTCNSTVTSIIANIDAGDQTNITFSAEAAELYRLELGDYKLVEITPIGFAPTSVKRYSSAHQRHTRGVFVLGFLGFLATAGSAMGAASLTLSAQSRTLLAGIVQQQQQLLDVVKRQQEMLRLTVWGTKNLQARVTAIEKYLKDQAQLNSWGCAFRQVCHTSVPWVNDTLTPDWNNMTWQEWEQKVRYLEANISQSLEQAQIQQEKNMYELQKLNSWDVFTNWLDFTSWVRYIQYGVYVVVGIVALRIVIYIVQMLSRLRKGYRPVFSSPPGYIQQIHIHKDQEQPAREETEEDVGSNGGDRSWPWPIAYIHFLIRLLIRLLTGLYNICRDLLSRISPILQPIFQSLQRALTAIRDWLRLKAAYLQYGCEWIQEAFQALARTTRETLAGAGRDLWRALQRIGRGILAVPRRIRQGAELALL.

The signal sequence occupies residues 1 to 22 (MKGSKNQLLIAIVLASAYLIHC). The Extracellular portion of the chain corresponds to 23-670 (KQFVTVFYGI…FTSWVRYIQY (648 aa)). N-linked (GlcNAc...) asparagine; by host glycosylation occurs at Asn37. Cys44 and Cys57 are oxidised to a cystine. 23 N-linked (GlcNAc...) asparagine; by host glycosylation sites follow: Asn70, Asn79, Asn112, Asn116, Asn128, Asn133, Asn142, Asn182, Asn183, Asn196, Asn228, Asn231, Asn238, Asn262, Asn268, Asn279, Asn290, Asn300, Asn355, Asn390, Asn400, Asn440, and Asn457. Disulfide bonds link Cys101–Cys204, Cys108–Cys195, Cys113–Cys154, Cys217–Cys247, and Cys227–Cys239. The tract at residues 113-153 (CTRNMTTWTGRTDTQNITIINDTSHARADNCTGLKEEEMID) is V1. Positions 154–195 (CQFSMTGLERDKRKQYTEAWYSKDVVCDNNTSSQSKCYMNHC) are V2. A V3 region spans residues 295–328 (CKRPGNKTVLPITFMSGFKFHSQPVINKKPRQAW). Cys295 and Cys329 are oxidised to a cystine. 2 disulfides stabilise this stretch: Cys382–Cys439 and Cys389–Cys412. Residues 389-412 (CNMTWFLNWVENRTGQKQRNYAPC) form a V4 region. The tract at residues 455–460 (QTNITF) is V5. The interval 503-523 (GVFVLGFLGFLATAGSAMGAA) is fusion peptide. Residues 566–582 (LQARVTAIEKYLKDQAQ) are immunosuppression. N-linked (GlcNAc...) asparagine; by host glycosylation is found at Asn602, Asn611, and Asn627. A coiled-coil region spans residues 615-636 (QEWEQKVRYLEANISQSLEQAQ). Residues 648–669 (KLNSWDVFTNWLDFTSWVRYIQ) are MPER; binding to GalCer. A helical membrane pass occupies residues 671–691 (GVYVVVGIVALRIVIYIVQML). The Cytoplasmic portion of the chain corresponds to 692–856 (SRLRKGYRPV…IRQGAELALL (165 aa)). The YXXV motif; contains endocytosis signal motif lies at 698–701 (YRPV). Cys764 is lipidated: S-palmitoyl cysteine; by host. Positions 855–856 (LL) match the Di-leucine internalization motif motif.

The mature envelope protein (Env) consists of a homotrimer of non-covalently associated gp120-gp41 heterodimers. The resulting complex protrudes from the virus surface as a spike. There seems to be as few as 10 spikes on the average virion. Interacts with human CD4, CCR5 and CXCR4, to form a P4HB/PDI-CD4-CXCR4-gp120 complex. Gp120 also interacts with the C-type lectins CD209/DC-SIGN and CLEC4M/DC-SIGNR (collectively referred to as DC-SIGN(R)). Gp120 and gp41 interact with GalCer. As to quaternary structure, the mature envelope protein (Env) consists of a homotrimer of non-covalently associated gp120-gp41 heterodimers. The resulting complex protrudes from the virus surface as a spike. There seems to be as few as 10 spikes on the average virion. Specific enzymatic cleavages in vivo yield mature proteins. Envelope glycoproteins are synthesized as an inactive precursor that is heavily N-glycosylated and processed likely by host cell furin in the Golgi to yield the mature SU and TM proteins. The cleavage site between SU and TM requires the minimal sequence [KR]-X-[KR]-R. In terms of processing, palmitoylation of the transmembrane protein and of Env polyprotein (prior to its proteolytic cleavage) is essential for their association with host cell membrane lipid rafts. Palmitoylation is therefore required for envelope trafficking to classical lipid rafts, but not for viral replication.

The protein resides in the virion membrane. The protein localises to the host cell membrane. It localises to the host endosome membrane. In terms of biological role, the surface protein gp120 (SU) attaches the virus to the host lymphoid cell by binding to the primary receptor CD4. This interaction induces a structural rearrangement creating a high affinity binding site for a chemokine coreceptor like CXCR4 and/or CCR5. This peculiar 2 stage receptor-interaction strategy allows gp120 to maintain the highly conserved coreceptor-binding site in a cryptic conformation, protected from neutralizing antibodies. Since CD4 also displays a binding site for the disulfide-isomerase P4HB/PDI, a P4HB/PDI-CD4-CXCR4-gp120 complex may form. In that complex, P4HB/PDI could reach and reduce gp120 disulfide bonds, causing major conformational changes in gp120. TXN, another PDI family member could also be involved in disulfide rearrangements in Env during fusion. These changes are transmitted to the transmembrane protein gp41 and are thought to activate its fusogenic potential by unmasking its fusion peptide. Functionally, the surface protein gp120 is a ligand for CD209/DC-SIGN and CLEC4M/DC-SIGNR, which are respectively found on dendritic cells (DCs), and on endothelial cells of liver sinusoids and lymph node sinuses. These interactions allow capture of viral particles at mucosal surfaces by these cells and subsequent transmission to permissive cells. DCs are professional antigen presenting cells, critical for host immunity by inducing specific immune responses against a broad variety of pathogens. They act as sentinels in various tissues where they take up antigen, process it, and present it to T-cells following migration to lymphoid organs. HIV subverts the migration properties of dendritic cells to gain access to CD4+ T-cells in lymph nodes. Virus transmission to permissive T-cells occurs either in trans (without DCs infection, through viral capture and transmission), or in cis (following DCs productive infection, through the usual CD4-gp120 interaction), thereby inducing a robust infection. In trans infection, bound virions remain infectious over days and it is proposed that they are not degraded, but protected in non-lysosomal acidic organelles within the DCs close to the cell membrane thus contributing to the viral infectious potential during DCs' migration from the periphery to the lymphoid tissues. On arrival at lymphoid tissues, intact virions recycle back to DCs' cell surface allowing virus transmission to CD4+ T-cells. Virion capture also seems to lead to MHC-II-restricted viral antigen presentation, and probably to the activation of HIV-specific CD4+ cells. Its function is as follows. The transmembrane protein gp41 (TM) acts as a class I viral fusion protein. Under the current model, the protein has at least 3 conformational states: pre-fusion native state, pre-hairpin intermediate state, and post-fusion hairpin state. During fusion of viral and target intracellular membranes, the coiled coil regions (heptad repeats) assume a trimer-of-hairpins structure, positioning the fusion peptide in close proximity to the C-terminal region of the ectodomain. The formation of this structure appears to drive apposition and subsequent fusion of viral and target cell membranes. Complete fusion occurs in host cell endosomes and is dynamin-dependent, however some lipid transfer might occur at the plasma membrane. The virus undergoes clathrin-dependent internalization long before endosomal fusion, thus minimizing the surface exposure of conserved viral epitopes during fusion and reducing the efficacy of inhibitors targeting these epitopes. Membranes fusion leads to delivery of the nucleocapsid into the cytoplasm. The envelope glycoprotein gp160 precursor down-modulates cell surface CD4 antigen by interacting with it in the endoplasmic reticulum and blocking its transport to the cell surface. In terms of biological role, the gp120-gp41 heterodimer seems to contribute to T-cell depletion during HIV-1 infection. The envelope glycoproteins expressed on the surface of infected cells induce apoptosis through an interaction with uninfected cells expressing the receptor (CD4) and the coreceptors CXCR4 or CCR5. This type of bystander killing may be obtained by at least three distinct mechanisms. First, the interaction between the 2 cells can induce cellular fusion followed by nuclear fusion within the syncytium. Syncytia are condemned to die from apoptosis. Second, the 2 interacting cells may not fuse entirely and simply exchange plasma membrane lipids, after a sort of hemifusion process, followed by rapid death. Third, it is possible that virus-infected cells, on the point of undergoing apoptosis, fuse with CD4-expressing cells, in which case apoptosis is rapidly transmitted from one cell to the other and thus occurs in a sort of contagious fashion. Functionally, the gp120-gp41 heterodimer allows rapid transcytosis of the virus through CD4 negative cells such as simple epithelial monolayers of the intestinal, rectal and endocervical epithelial barriers. Both gp120 and gp41 specifically recognize glycosphingolipids galactosyl-ceramide (GalCer) or 3' sulfo-galactosyl-ceramide (GalS) present in the lipid rafts structures of epithelial cells. Binding to these alternative receptors allows the rapid transcytosis of the virus through the epithelial cells. This transcytotic vesicle-mediated transport of virions from the apical side to the basolateral side of the epithelial cells does not involve infection of the cells themselves. This is Envelope glycoprotein gp160 (env) from Human immunodeficiency virus type 2 subtype A (isolate NIH-Z) (HIV-2).